Consider the following 359-residue polypeptide: Adenosine 3'-phospho 5'-phosphosulfate transporter 1 (359 aa).

A run of 7 helical transmembrane segments spans residues 26-46 (NMKL…YGIL), 68-88 (STFL…VIVL), 157-177 (YSIA…GKIS), 184-204 (TSYG…TSTF), 228-248 (SIIS…IEFI), 254-276 (VFFD…YYTI), and 300-320 (TLIY…LVFG). Residues 332-359 (KKHGGHSHGGSNAATTTTPSNNSNNTEK) form a disordered region. Residues 340–359 (GGSNAATTTTPSNNSNNTEK) are compositionally biased toward low complexity.

The protein belongs to the nucleotide-sugar transporter family. SLC35B subfamily.

It localises to the golgi apparatus membrane. It catalyses the reaction 3'-phosphoadenylyl sulfate(in) + adenosine 3',5'-bisphosphate(out) = 3'-phosphoadenylyl sulfate(out) + adenosine 3',5'-bisphosphate(in). In terms of biological role, probably functions as a 3'-phosphoadenylyl sulfate:adenosine 3',5'-bisphosphate antiporter at the Golgi membranes. Mediates the transport from the cytosol into the lumen of the Golgi of 3'-phosphoadenylyl sulfate/adenosine 3'-phospho 5'-phosphosulfate (PAPS), a universal sulfuryl donor for sulfation events that take place in that compartment. The polypeptide is Adenosine 3'-phospho 5'-phosphosulfate transporter 1 (slc35b2) (Dictyostelium discoideum (Social amoeba)).